The sequence spans 193 residues: Urease accessory protein UreE (193 aa).

Residues 138–193 (RGAYHSHGAHSHDQGHAAHDHGNEHKHDHGHDHVHGPGCDHDHDHDHGHHHDHKHD) form a disordered region. Positions 147–193 (HSHDQGHAAHDHGNEHKHDHGHDHVHGPGCDHDHDHDHGHHHDHKHD) are enriched in basic and acidic residues.

Belongs to the UreE family.

The protein localises to the cytoplasm. In terms of biological role, involved in urease metallocenter assembly. Binds nickel. Probably functions as a nickel donor during metallocenter assembly. The polypeptide is Urease accessory protein UreE (Rhizobium leguminosarum bv. trifolii (strain WSM2304)).